A 110-amino-acid chain; its full sequence is UPF0060 membrane protein Mmwyl1_1139 (110 aa).

4 helical membrane passes run 7-27, 33-53, 63-83, and 87-107; these read ISLF…PYLW, TIWL…LLTL, AAYG…VDGI, and TWDM…MFAP.

The protein belongs to the UPF0060 family.

Its subcellular location is the cell inner membrane. This Marinomonas sp. (strain MWYL1) protein is UPF0060 membrane protein Mmwyl1_1139.